Reading from the N-terminus, the 122-residue chain is Large ribosomal subunit protein uL14 (122 aa).

The protein belongs to the universal ribosomal protein uL14 family. Part of the 50S ribosomal subunit. Forms a cluster with proteins L3 and L19. In the 70S ribosome, L14 and L19 interact and together make contacts with the 16S rRNA in bridges B5 and B8.

Functionally, binds to 23S rRNA. Forms part of two intersubunit bridges in the 70S ribosome. This Nitratiruptor sp. (strain SB155-2) protein is Large ribosomal subunit protein uL14.